The following is a 508-amino-acid chain: Light-independent protochlorophyllide reductase subunit B (508 aa).

Aspartate 36 contributes to the [4Fe-4S] cluster binding site. Aspartate 294 (proton donor) is an active-site residue. 429 to 430 (GM) contributes to the substrate binding site.

This sequence belongs to the ChlB/BchB/BchZ family. Protochlorophyllide reductase is composed of three subunits; ChlL, ChlN and ChlB. Forms a heterotetramer of two ChlB and two ChlN subunits. Requires [4Fe-4S] cluster as cofactor.

The enzyme catalyses chlorophyllide a + oxidized 2[4Fe-4S]-[ferredoxin] + 2 ADP + 2 phosphate = protochlorophyllide a + reduced 2[4Fe-4S]-[ferredoxin] + 2 ATP + 2 H2O. Its pathway is porphyrin-containing compound metabolism; chlorophyll biosynthesis (light-independent). Component of the dark-operative protochlorophyllide reductase (DPOR) that uses Mg-ATP and reduced ferredoxin to reduce ring D of protochlorophyllide (Pchlide) to form chlorophyllide a (Chlide). This reaction is light-independent. The NB-protein (ChlN-ChlB) is the catalytic component of the complex. The chain is Light-independent protochlorophyllide reductase subunit B from Acaryochloris marina (strain MBIC 11017).